The sequence spans 582 residues: Acylamino-acid-releasing enzyme (582 aa).

Active-site charge relay system residues include serine 445, aspartate 524, and histidine 556.

It belongs to the peptidase S9C family.

It localises to the cytoplasm. It carries out the reaction Cleavage of an N-acetyl or N-formyl amino acid from the N-terminus of a polypeptide.. Its function is as follows. This enzyme catalyzes the hydrolysis of the N-terminal peptide bond of an N-acetylated peptide to generate an N-acetylated amino acid and a peptide with a free N-terminus. This Aeropyrum pernix (strain ATCC 700893 / DSM 11879 / JCM 9820 / NBRC 100138 / K1) protein is Acylamino-acid-releasing enzyme.